The following is a 432-amino-acid chain: Adenylosuccinate synthetase (432 aa).

GTP-binding positions include 12–18 (GDEGKGK) and 40–42 (GHT). Residue aspartate 13 is the Proton acceptor of the active site. Residues aspartate 13 and glycine 40 each contribute to the Mg(2+) site. Residues 13–16 (DEGK), 38–41 (NAGH), threonine 132, arginine 146, glutamine 226, threonine 241, and arginine 305 contribute to the IMP site. The Proton donor role is filled by histidine 41. Residue 301–307 (VVTGRKR) participates in substrate binding. GTP-binding positions include arginine 307, 333–335 (KLD), and 415–417 (STS).

This sequence belongs to the adenylosuccinate synthetase family. In terms of assembly, homodimer. It depends on Mg(2+) as a cofactor.

The protein resides in the cytoplasm. The catalysed reaction is IMP + L-aspartate + GTP = N(6)-(1,2-dicarboxyethyl)-AMP + GDP + phosphate + 2 H(+). It participates in purine metabolism; AMP biosynthesis via de novo pathway; AMP from IMP: step 1/2. In terms of biological role, plays an important role in the de novo pathway of purine nucleotide biosynthesis. Catalyzes the first committed step in the biosynthesis of AMP from IMP. The protein is Adenylosuccinate synthetase of Mesorhizobium japonicum (strain LMG 29417 / CECT 9101 / MAFF 303099) (Mesorhizobium loti (strain MAFF 303099)).